The primary structure comprises 356 residues: Histidinol-phosphate aminotransferase (356 aa).

Lys-211 is subject to N6-(pyridoxal phosphate)lysine.

The protein belongs to the class-II pyridoxal-phosphate-dependent aminotransferase family. Histidinol-phosphate aminotransferase subfamily. Homodimer. The cofactor is pyridoxal 5'-phosphate.

It catalyses the reaction L-histidinol phosphate + 2-oxoglutarate = 3-(imidazol-4-yl)-2-oxopropyl phosphate + L-glutamate. It participates in amino-acid biosynthesis; L-histidine biosynthesis; L-histidine from 5-phospho-alpha-D-ribose 1-diphosphate: step 7/9. The sequence is that of Histidinol-phosphate aminotransferase from Blochmanniella floridana.